Reading from the N-terminus, the 1196-residue chain is DNA polymerase beta (1196 aa).

This sequence belongs to the DNA polymerase type-B family.

The enzyme catalyses DNA(n) + a 2'-deoxyribonucleoside 5'-triphosphate = DNA(n+1) + diphosphate. Functionally, DNA-directed DNA polymerase involved in viral DNA replication. This is DNA polymerase beta from African swine fever virus (isolate Pig/Kenya/KEN-50/1950) (ASFV).